The following is a 215-amino-acid chain: Ribose-5-phosphate isomerase A (215 aa).

Substrate is bound by residues Thr-26–Thr-29, Asp-79–Asp-82, and Lys-92–Gly-95. Catalysis depends on Glu-101, which acts as the Proton acceptor. Residue Lys-119 coordinates substrate.

This sequence belongs to the ribose 5-phosphate isomerase family. Homodimer.

It catalyses the reaction aldehydo-D-ribose 5-phosphate = D-ribulose 5-phosphate. It functions in the pathway carbohydrate degradation; pentose phosphate pathway; D-ribose 5-phosphate from D-ribulose 5-phosphate (non-oxidative stage): step 1/1. Its function is as follows. Catalyzes the reversible conversion of ribose-5-phosphate to ribulose 5-phosphate. The protein is Ribose-5-phosphate isomerase A of Xanthomonas oryzae pv. oryzae (strain MAFF 311018).